The following is a 953-amino-acid chain: Isoleucine--tRNA ligase (953 aa).

A 'HIGH' region motif is present at residues 57–67 (PYANGDIHIGH). An L-isoleucyl-5'-AMP-binding site is contributed by E582. Positions 623–627 (KMSKS) match the 'KMSKS' region motif. K626 is an ATP binding site. Residues C916, C919, C936, and C939 each contribute to the Zn(2+) site.

The protein belongs to the class-I aminoacyl-tRNA synthetase family. IleS type 1 subfamily. As to quaternary structure, monomer. Requires Zn(2+) as cofactor.

The protein resides in the cytoplasm. It catalyses the reaction tRNA(Ile) + L-isoleucine + ATP = L-isoleucyl-tRNA(Ile) + AMP + diphosphate. In terms of biological role, catalyzes the attachment of isoleucine to tRNA(Ile). As IleRS can inadvertently accommodate and process structurally similar amino acids such as valine, to avoid such errors it has two additional distinct tRNA(Ile)-dependent editing activities. One activity is designated as 'pretransfer' editing and involves the hydrolysis of activated Val-AMP. The other activity is designated 'posttransfer' editing and involves deacylation of mischarged Val-tRNA(Ile). This chain is Isoleucine--tRNA ligase, found in Bordetella pertussis (strain Tohama I / ATCC BAA-589 / NCTC 13251).